The sequence spans 197 residues: Imidazoleglycerol-phosphate dehydratase (197 aa).

The protein belongs to the imidazoleglycerol-phosphate dehydratase family.

It is found in the cytoplasm. It carries out the reaction D-erythro-1-(imidazol-4-yl)glycerol 3-phosphate = 3-(imidazol-4-yl)-2-oxopropyl phosphate + H2O. It functions in the pathway amino-acid biosynthesis; L-histidine biosynthesis; L-histidine from 5-phospho-alpha-D-ribose 1-diphosphate: step 6/9. The chain is Imidazoleglycerol-phosphate dehydratase from Pseudomonas fluorescens (strain Pf0-1).